The chain runs to 380 residues: Cytochrome b (380 aa).

4 consecutive transmembrane segments (helical) span residues 33–53 (FGSLLGLCLITQLLTGLFLAM), 77–98 (WLIRNMHANGASFFFICLYMHI), 113–133 (WNIGVVLFLLVMMTSFVGYVL), and 178–198 (FFAFHFLFPFVVAAFTMLHLL). Heme b-binding residues include His-83 and His-97. Heme b contacts are provided by His-182 and His-196. His-201 serves as a coordination point for a ubiquinone. The next 4 helical transmembrane spans lie at 226–246 (YKDLLGFAVMLLGLTALALFA), 288–308 (LGGVLALLFSILVLMVVPFLH), 320–340 (LTQMLFWVLVADMLVLTWIGG), and 347–367 (FIIIGQVASVLYFSLFLVLFP).

This sequence belongs to the cytochrome b family. The cytochrome bc1 complex contains 3 respiratory subunits (MT-CYB, CYC1 and UQCRFS1), 2 core proteins (UQCRC1 and UQCRC2) and probably 6 low-molecular weight proteins. Heme b is required as a cofactor.

The protein resides in the mitochondrion inner membrane. Functionally, component of the ubiquinol-cytochrome c reductase complex (complex III or cytochrome b-c1 complex) that is part of the mitochondrial respiratory chain. The b-c1 complex mediates electron transfer from ubiquinol to cytochrome c. Contributes to the generation of a proton gradient across the mitochondrial membrane that is then used for ATP synthesis. The protein is Cytochrome b (mt-cyb) of Gadus morhua (Atlantic cod).